The chain runs to 456 residues: Na(+)/H(+) antiporter NhaA 3 (456 aa).

The next 11 membrane-spanning stretches (helical) occupy residues 32–52, 87–107, 114–134, 145–165, 174–194, 202–222, 233–253, 318–338, 347–367, 382–402, and 417–437; these read IEATSGAVLLLATVVALTLSN, GLMTLFFFIVALEIKREVVLG, MVALSVVAAAGGMLVPMGLYL, GWGVVMPTDTAFVIGCLALLG, VFLLSLAVVDDLAAILVVAVG, TALALGAVGLVIIRGMALLGV, AIIWLAVNASGIHATIVGVIL, WVAFGVMPLFALANAGVPITI, LAVMAGFVLGKPIGVTAFAWL, WGGLVGGALLTGIGFTMALFI, and LGILAASVVSSVAGLTLLCAL.

The protein belongs to the NhaA Na(+)/H(+) (TC 2.A.33) antiporter family.

The protein localises to the cell inner membrane. The catalysed reaction is Na(+)(in) + 2 H(+)(out) = Na(+)(out) + 2 H(+)(in). Its function is as follows. Na(+)/H(+) antiporter that extrudes sodium in exchange for external protons. This is Na(+)/H(+) antiporter NhaA 3 from Acidiphilium cryptum (strain JF-5).